The primary structure comprises 279 residues: Dermonecrotic toxin LrSicTox-alphaIA1i (279 aa).

Residue histidine 11 is part of the active site. Mg(2+) is bound by residues glutamate 31 and aspartate 33. Catalysis depends on histidine 47, which acts as the Nucleophile. Disulfide bonds link cysteine 51–cysteine 57 and cysteine 53–cysteine 196. Position 91 (aspartate 91) interacts with Mg(2+). The N-linked (GlcNAc...) asparagine glycan is linked to asparagine 256.

This sequence belongs to the arthropod phospholipase D family. Class II subfamily. Mg(2+) is required as a cofactor. Expressed by the venom gland.

It is found in the secreted. The enzyme catalyses an N-(acyl)-sphingosylphosphocholine = an N-(acyl)-sphingosyl-1,3-cyclic phosphate + choline. It catalyses the reaction an N-(acyl)-sphingosylphosphoethanolamine = an N-(acyl)-sphingosyl-1,3-cyclic phosphate + ethanolamine. The catalysed reaction is a 1-acyl-sn-glycero-3-phosphocholine = a 1-acyl-sn-glycero-2,3-cyclic phosphate + choline. It carries out the reaction a 1-acyl-sn-glycero-3-phosphoethanolamine = a 1-acyl-sn-glycero-2,3-cyclic phosphate + ethanolamine. With respect to regulation, inhibited with low affinity by edelfosine. Functionally, dermonecrotic toxins cleave the phosphodiester linkage between the phosphate and headgroup of certain phospholipids (sphingolipid and lysolipid substrates), forming an alcohol (often choline) and a cyclic phosphate. This toxin acts on sphingomyelin (SM). It also acts on a broad range of lysophospholipids, like lysophosphatidylinositol (LPI), lysophosphatidylglycerol (LPG), lysophosphatidylethanolamine (LPE), lysobisphosphatidic acid (LBPA), lysophosphatidylserine (LPS) and lysophosphatidylcholines (LPC) of varying chain lengths. The substrate preference is LPI &gt; LPG &gt; LPS &gt; LPC &gt;&gt; LPE, LBPA. Furthermore, the enzyme also act on cyclic phosphatidic acid and lyso-platelet activating factor (LPAF, an alkyl-LPC). The enzyme does not act on sphingosylphosphorylcholine (SPC, also known as lyso-sphingomyelin) and PAF. The toxin may also act on ceramide phosphoethanolamine (CPE). It acts by transphosphatidylation, releasing exclusively cyclic phosphate products as second products. It does not exhibit detectable PLA1/2 activity. It induces dose-dependent hemolysis and dermonecrosis. Also induces increased vascular permeability, edema, inflammatory response, and platelet aggregation. The chain is Dermonecrotic toxin LrSicTox-alphaIA1i from Loxosceles reclusa (Brown recluse spider).